The following is a 509-amino-acid chain: Probable cation transporter HKT2;3 (509 aa).

At 1–32 the chain is on the cytoplasmic side; it reads MPIRLHIFVNSARHAINSSAFICRFIAYHLSP. 2 consecutive transmembrane segments (helical) span residues 33–53 and 96–116; these read LLIH…SLVV and ILTL…GLVL. Residues 117 to 164 are Cytoplasmic-facing; the sequence is ESSKQNKHDPENRRVSSVTVCKQSQLEEATPQTPSMNSIDIKKRCLKY. The next 2 helical transmembrane spans lie at 165-185 and 237-257; these read LVFV…LLVF and GLLL…PVFL. The Cytoplasmic portion of the chain corresponds to 258 to 296; that stretch reads RLVIWALRGLRLAKAEEPDFMMNNSSAVGFSHLLPNLQT. 2 helical membrane-spanning segments follow: residues 297-317 and 353-373; these read IFLA…FCCL and CSLV…TPSL. Residues 374–400 are Cytoplasmic-facing; it reads TKLFSACQDHKRIGPESDDRTSKGKPF. Transmembrane regions (helical) follow at residues 401 to 421 and 474 to 494; these read LKMM…LVCI and AYNF…LAML. Residues 495–509 lie on the Cytoplasmic side of the membrane; that stretch reads CGRLNSKDSTSARTR.

It belongs to the TrkH potassium transport family. HKT (TC 2.A.38.3) subfamily.

It localises to the membrane. Probable cation transporter. May be involved in regulation of potassium-sodium homeostasis. The protein is Probable cation transporter HKT2;3 of Oryza sativa subsp. japonica (Rice).